Reading from the N-terminus, the 133-residue chain is Probable 4-amino-4-deoxy-L-arabinose-phosphoundecaprenol flippase subunit ArnF (133 aa).

Residues 1-5 (MKTGY) lie on the Cytoplasmic side of the membrane. A helical membrane pass occupies residues 6-26 (LWAIASALLVTVAQLLLKIGM). The Periplasmic segment spans residues 27–47 (SELPDLQLEKQWFDLHWLWAN). A helical transmembrane segment spans residues 48–68 (IIPISVVFVGLIGYVLSMVCW). An EamA domain is found at 51–125 (ISVVFVGLIG…IMLGVWLISQ (75 aa)). Over 69 to 80 (LLTLRTIPLNKA) the chain is Cytoplasmic. Residues 81–101 (YPLISLSYVFVYILAVVLPWF) form a helical membrane-spanning segment. At 102–103 (QE) the chain is on the periplasmic side. Residues 104 to 124 (TLSWSKTIGIIFIMLGVWLIS) traverse the membrane as a helical segment. Topologically, residues 125–133 (QKTEQTTSH) are cytoplasmic.

It belongs to the ArnF family. In terms of assembly, heterodimer of ArnE and ArnF.

It localises to the cell inner membrane. It functions in the pathway bacterial outer membrane biogenesis; lipopolysaccharide biosynthesis. Functionally, translocates 4-amino-4-deoxy-L-arabinose-phosphoundecaprenol (alpha-L-Ara4N-phosphoundecaprenol) from the cytoplasmic to the periplasmic side of the inner membrane. The polypeptide is Probable 4-amino-4-deoxy-L-arabinose-phosphoundecaprenol flippase subunit ArnF (Proteus mirabilis (strain HI4320)).